Consider the following 512-residue polypeptide: Sucrose-6-phosphate hydrolase (512 aa).

Residues 40–43 (WMND), glutamine 59, tryptophan 67, 102–103 (FS), 165–166 (RD), glutamate 229, and tryptophan 311 each bind substrate. The active site involves aspartate 43.

The protein belongs to the glycosyl hydrolase 32 family.

It localises to the cytoplasm. The enzyme catalyses Hydrolysis of terminal non-reducing beta-D-fructofuranoside residues in beta-D-fructofuranosides.. It participates in glycan biosynthesis; sucrose metabolism. The protein is Sucrose-6-phosphate hydrolase (sacA) of Zymomonas mobilis subsp. mobilis (strain ATCC 31821 / ZM4 / CP4).